Reading from the N-terminus, the 297-residue chain is MKLKDFAFYAPCVWGTTYFVTTQFLPADKPLLAALIRALPAGIILILGKNLPPVGWLWRLFVLGALNIGVFFVMLFFAAYRLPGGVVALVGSLQPLIVILLSFLLLTQPVLKKQMVAAVAGGIGIVLLISLPKAPLNPAGLVASALATMSMASGLVLTKKWGRPAGMTMLTFTGWQLFCGGLVILPVQMLTEPLPDLVTLTNLAGYLYLAIPGSLLAYFMWFSGLEANSPVIMSLLGFLSPLVALLLGFLFLQQGLSGAQLVGVVFIFSALIIVQDISLFSRRKKVKPLEQSDCVIK.

A run of 10 helical transmembrane segments spans residues 6–26 (FAFY…QFLP), 38–58 (ALPA…GWLW), 60–80 (LFVL…FAAY), 86–106 (VVAL…FLLL), 116–136 (VAAV…KAPL), 138–158 (PAGL…LVLT), 167–187 (MTML…ILPV), 203–223 (LAGY…MWFS), 231–251 (VIMS…GFLF), and 261–281 (LVGV…SLFS). 2 EamA domains span residues 12-130 (CVWG…LLIS) and 149-276 (MSMA…IVQD).

This sequence belongs to the EamA transporter family.

It is found in the cell membrane. Functionally, involved in pectinase, cellulase, and blue pigment regulation. The chain is Protein PecM (pecM) from Dickeya dadantii (strain 3937) (Erwinia chrysanthemi (strain 3937)).